The primary structure comprises 491 residues: Cobyric acid synthase (491 aa).

Residues 246 to 432 (RKLIACPILP…VHGLLADAEL (187 aa)) enclose the GATase cobBQ-type domain. The active-site Nucleophile is Cys328. His424 is a catalytic residue.

This sequence belongs to the CobB/CobQ family. CobQ subfamily.

It participates in cofactor biosynthesis; adenosylcobalamin biosynthesis. Functionally, catalyzes amidations at positions B, D, E, and G on adenosylcobyrinic A,C-diamide. NH(2) groups are provided by glutamine, and one molecule of ATP is hydrogenolyzed for each amidation. The sequence is that of Cobyric acid synthase from Novosphingobium aromaticivorans (strain ATCC 700278 / DSM 12444 / CCUG 56034 / CIP 105152 / NBRC 16084 / F199).